The chain runs to 182 residues: Adenine phosphoribosyltransferase (182 aa).

The protein belongs to the purine/pyrimidine phosphoribosyltransferase family. Homodimer.

Its subcellular location is the cytoplasm. The catalysed reaction is AMP + diphosphate = 5-phospho-alpha-D-ribose 1-diphosphate + adenine. Its pathway is purine metabolism; AMP biosynthesis via salvage pathway; AMP from adenine: step 1/1. Its function is as follows. Catalyzes a salvage reaction resulting in the formation of AMP, that is energically less costly than de novo synthesis. The chain is Adenine phosphoribosyltransferase from Renibacterium salmoninarum (strain ATCC 33209 / DSM 20767 / JCM 11484 / NBRC 15589 / NCIMB 2235).